The primary structure comprises 344 residues: Phosphate acyltransferase (344 aa).

It belongs to the PlsX family. As to quaternary structure, homodimer. Probably interacts with PlsY.

It localises to the cytoplasm. The catalysed reaction is a fatty acyl-[ACP] + phosphate = an acyl phosphate + holo-[ACP]. Its pathway is lipid metabolism; phospholipid metabolism. Catalyzes the reversible formation of acyl-phosphate (acyl-PO(4)) from acyl-[acyl-carrier-protein] (acyl-ACP). This enzyme utilizes acyl-ACP as fatty acyl donor, but not acyl-CoA. This is Phosphate acyltransferase from Yersinia enterocolitica serotype O:8 / biotype 1B (strain NCTC 13174 / 8081).